The sequence spans 983 residues: Glycine dehydrogenase (decarboxylating) (983 aa).

At Lys-726 the chain carries N6-(pyridoxal phosphate)lysine.

Belongs to the GcvP family. The glycine cleavage system is composed of four proteins: P, T, L and H. The cofactor is pyridoxal 5'-phosphate.

It catalyses the reaction N(6)-[(R)-lipoyl]-L-lysyl-[glycine-cleavage complex H protein] + glycine + H(+) = N(6)-[(R)-S(8)-aminomethyldihydrolipoyl]-L-lysyl-[glycine-cleavage complex H protein] + CO2. Functionally, the glycine cleavage system catalyzes the degradation of glycine. The P protein binds the alpha-amino group of glycine through its pyridoxal phosphate cofactor; CO(2) is released and the remaining methylamine moiety is then transferred to the lipoamide cofactor of the H protein. This Synechocystis sp. (strain ATCC 27184 / PCC 6803 / Kazusa) protein is Glycine dehydrogenase (decarboxylating).